Consider the following 331-residue polypeptide: Beta-ketoacyl-[acyl-carrier-protein] synthase III (331 aa).

Catalysis depends on residues Cys113 and His253. The segment at 254 to 258 is ACP-binding; sequence QANTR. Asn283 is an active-site residue.

It belongs to the thiolase-like superfamily. FabH family. As to quaternary structure, homodimer.

It is found in the cytoplasm. It catalyses the reaction malonyl-[ACP] + acetyl-CoA + H(+) = 3-oxobutanoyl-[ACP] + CO2 + CoA. It functions in the pathway lipid metabolism; fatty acid biosynthesis. Its function is as follows. Catalyzes the condensation reaction of fatty acid synthesis by the addition to an acyl acceptor of two carbons from malonyl-ACP. Catalyzes the first condensation reaction which initiates fatty acid synthesis and may therefore play a role in governing the total rate of fatty acid production. Possesses both acetoacetyl-ACP synthase and acetyl transacylase activities. Its substrate specificity determines the biosynthesis of branched-chain and/or straight-chain of fatty acids. This chain is Beta-ketoacyl-[acyl-carrier-protein] synthase III, found in Desulfitobacterium hafniense (strain DSM 10664 / DCB-2).